A 250-amino-acid chain; its full sequence is CCN family member 5 (250 aa).

Positions 1 to 23 (MRGSPLIRLLATSFLCLLSMVCA) are cleaved as a signal peptide. 6 cysteine pairs are disulfide-bonded: Cys-22–Cys-50, Cys-26–Cys-52, Cys-32–Cys-53, Cys-39–Cys-56, Cys-64–Cys-78, and Cys-70–Cys-100. In terms of domain architecture, IGFBP N-terminal spans 24 to 103 (QLCRTPCTCP…DEDDGDCEVN (80 aa)). Positions 98–164 (GDCEVNGRRY…GKCCPEWVCD (67 aa)) constitute a VWFC domain. One can recognise a TSP type-1 domain in the interval 194-238 (WPNWSTAWGPCSTTCGLGIATRVSNQNRFCQLEIQRRLCLPRPCL). Asn-196 carries N-linked (GlcNAc...) asparagine glycosylation.

It belongs to the CCN family.

The protein localises to the secreted. Its function is as follows. May play an important role in modulating bone turnover. Promotes the adhesion of osteoblast cells and inhibits the binding of fibrinogen to integrin receptors. In addition, inhibits osteocalcin production. The chain is CCN family member 5 (Ccn5) from Rattus norvegicus (Rat).